We begin with the raw amino-acid sequence, 276 residues long: Formamidopyrimidine-DNA glycosylase (276 aa).

P2 acts as the Schiff-base intermediate with DNA in catalysis. The active-site Proton donor is E3. K60 (proton donor; for beta-elimination activity) is an active-site residue. DNA-binding residues include R113 and R152. The FPG-type zinc finger occupies 241-275 (NVFRKTGHPCPRCGHLIEKLIVAQRSTHICPICQK). The active-site Proton donor; for delta-elimination activity is R265.

The protein belongs to the FPG family. As to quaternary structure, monomer. It depends on Zn(2+) as a cofactor.

It catalyses the reaction Hydrolysis of DNA containing ring-opened 7-methylguanine residues, releasing 2,6-diamino-4-hydroxy-5-(N-methyl)formamidopyrimidine.. The enzyme catalyses 2'-deoxyribonucleotide-(2'-deoxyribose 5'-phosphate)-2'-deoxyribonucleotide-DNA = a 3'-end 2'-deoxyribonucleotide-(2,3-dehydro-2,3-deoxyribose 5'-phosphate)-DNA + a 5'-end 5'-phospho-2'-deoxyribonucleoside-DNA + H(+). Involved in base excision repair of DNA damaged by oxidation or by mutagenic agents. Acts as a DNA glycosylase that recognizes and removes damaged bases. Has a preference for oxidized purines, such as 7,8-dihydro-8-oxoguanine (8-oxoG). Has AP (apurinic/apyrimidinic) lyase activity and introduces nicks in the DNA strand. Cleaves the DNA backbone by beta-delta elimination to generate a single-strand break at the site of the removed base with both 3'- and 5'-phosphates. In Protochlamydia amoebophila (strain UWE25), this protein is Formamidopyrimidine-DNA glycosylase.